The primary structure comprises 197 residues: Protein-S-isoprenylcysteine O-methyltransferase B (197 aa).

3 consecutive transmembrane segments (helical) span residues 16–36 (MFLA…AIHG), 52–72 (ALAM…FPGL), and 81–101 (FGLT…ITAG). S-adenosyl-L-methionine-binding positions include 116–119 (HKLV), Tyr-124, and 129–132 (HPSY). A helical membrane pass occupies residues 140–160 (VGTQVMLCNPISAIAFAVVVW). Arg-166 is a substrate binding site. Position 170 (Glu-170) interacts with S-adenosyl-L-methionine.

This sequence belongs to the class VI-like SAM-binding methyltransferase superfamily. Isoprenylcysteine carboxyl methyltransferase family. It depends on Zn(2+) as a cofactor. In terms of tissue distribution, expressed in flowers, stems, leaves, roots and siliques. Detected in apices and vascular tissues of leaves and roots, in the stigma and in the filaments and anthers of stamen. Not found in petioles or hypocotyls.

The protein localises to the endoplasmic reticulum membrane. It catalyses the reaction [protein]-C-terminal S-[(2E,6E)-farnesyl]-L-cysteine + S-adenosyl-L-methionine = [protein]-C-terminal S-[(2E,6E)-farnesyl]-L-cysteine methyl ester + S-adenosyl-L-homocysteine. With respect to regulation, inhibited by farnesylthioacetic acid (FTAA) and N-acetyl-S-trans, trans-farnesyl-l-cysteine (AFC). Catalyzes the post-translational methylation of isoprenylated C-terminal cysteine residues, resulting in the modulation of the function of prenylated proteins. Involved in negative regulation of abscisic acid signaling. Carboxyl methylation is a reversible and potentially regulated step in the post-translational modification of prenylated proteins. The protein is Protein-S-isoprenylcysteine O-methyltransferase B of Arabidopsis thaliana (Mouse-ear cress).